The chain runs to 129 residues: Large ribosomal subunit protein bL17 (129 aa).

This sequence belongs to the bacterial ribosomal protein bL17 family. As to quaternary structure, part of the 50S ribosomal subunit. Contacts protein L32.

The polypeptide is Large ribosomal subunit protein bL17 (Stutzerimonas stutzeri (strain A1501) (Pseudomonas stutzeri)).